A 218-amino-acid chain; its full sequence is Cytochrome b6 (218 aa).

Residues 35 to 55 (IFYCLGGITLVCFLIQFATGF) traverse the membrane as a helical segment. C38 lines the heme c pocket. Heme b-binding residues include H89 and H103. 3 consecutive transmembrane segments (helical) span residues 93 to 113 (ASMMVLMLILHVFRVYLTGGF), 119 to 139 (LTWVTGVTMAVITVSFGVTGY), and 189 to 209 (LHTFVMPWLLAVFMLMHFLMI). H190 and H205 together coordinate heme b.

It belongs to the cytochrome b family. PetB subfamily. In terms of assembly, the 4 large subunits of the cytochrome b6-f complex are cytochrome b6, subunit IV (17 kDa polypeptide, PetD), cytochrome f and the Rieske protein, while the 4 small subunits are PetG, PetL, PetM and PetN. The complex functions as a dimer. Heme b is required as a cofactor. The cofactor is heme c.

The protein localises to the cellular thylakoid membrane. Functionally, component of the cytochrome b6-f complex, which mediates electron transfer between photosystem II (PSII) and photosystem I (PSI), cyclic electron flow around PSI, and state transitions. The sequence is that of Cytochrome b6 from Synechococcus sp. (strain CC9311).